Consider the following 467-residue polypeptide: Protein PHOSPHATE STARVATION RESPONSE 3 (467 aa).

Positions 227-266 (MSLPVSSCSDQEDLQDARSPAKVQLSSSRSSSGTASCNKP) are disordered. The HTH myb-type domain maps to 262–322 (SCNKPRLRWT…HLQKYRLAKY (61 aa)). Residues 293 to 318 (PKGVLKLMKVEGLTIYHIKSHLQKYR) constitute a DNA-binding region (H-T-H motif). Residues 327 to 337 (KEDKKQEEKKT) are compositionally biased toward basic and acidic residues. Disordered stretches follow at residues 327–353 (KEDK…KSAQ) and 400–467 (RESI…VHDE). Polar residues predominate over residues 402–412 (SISSMTSTTEG). Basic and acidic residues-rich tracts occupy residues 419–428 (PMEKTEDKAE) and 438–467 (RITD…VHDE).

It localises to the nucleus. Functionally, transcription factor involved in phosphate starvation signaling. Binds to P1BS, an imperfect palindromic sequence 5'-GNATATNC-3', to promote the expression of inorganic phosphate (Pi) starvation-responsive genes. Functionally redundant with PHR1 and PHR2 in regulating Pi starvation response and Pi homeostasis. The sequence is that of Protein PHOSPHATE STARVATION RESPONSE 3 from Oryza sativa subsp. indica (Rice).